A 247-amino-acid polypeptide reads, in one-letter code: Chymase (247 aa).

An N-terminal signal peptide occupies residues 1-19; it reads MHLLTLHLLLLLLGSSTKA. Residues 20 to 21 constitute a propeptide, activation peptide; the sequence is GE. The region spanning 22–245 is the Peptidase S1 domain; the sequence is IIGGTECIPH…YRPWINKILR (224 aa). Cys51 and Cys67 are oxidised to a cystine. Residue His66 is the Charge relay system of the active site. The N-linked (GlcNAc...) asparagine glycan is linked to Asn80. The active-site Charge relay system is the Asp110. 2 disulfide bridges follow: Cys144-Cys209 and Cys175-Cys188. The active-site Charge relay system is the Ser203.

It belongs to the peptidase S1 family. Granzyme subfamily. Mast cells.

It localises to the secreted. The protein localises to the cytoplasmic granule. It carries out the reaction Preferential cleavage: Phe-|-Xaa &gt; Tyr-|-Xaa &gt; Trp-|-Xaa &gt; Leu-|-Xaa.. Its function is as follows. Major secreted protease of mast cells with suspected roles in vasoactive peptide generation, extracellular matrix degradation, and regulation of gland secretion. This is Chymase (Cma1) from Mus musculus (Mouse).